We begin with the raw amino-acid sequence, 119 residues long: Ribosome-binding factor A (119 aa).

Belongs to the RbfA family. In terms of assembly, monomer. Binds 30S ribosomal subunits, but not 50S ribosomal subunits or 70S ribosomes.

It is found in the cytoplasm. Its function is as follows. One of several proteins that assist in the late maturation steps of the functional core of the 30S ribosomal subunit. Associates with free 30S ribosomal subunits (but not with 30S subunits that are part of 70S ribosomes or polysomes). Required for efficient processing of 16S rRNA. May interact with the 5'-terminal helix region of 16S rRNA. The chain is Ribosome-binding factor A from Lactococcus lactis subsp. cremoris (strain SK11).